The sequence spans 67 residues: uncharacterized protein (67 aa).

This sequence belongs to the baculoviridae 8 kDa protein family.

This is an uncharacterized protein from Autographa californica nuclear polyhedrosis virus (AcMNPV).